The primary structure comprises 408 residues: UPF0761 membrane protein Avin_36810 (408 aa).

6 helical membrane passes run 33–53, 92–112, 132–152, 174–194, 209–229, and 238–258; these read YTALFAVVPIMTLIFVVLSVV, HLTWLGVGVLMVTALLMLMTV, FLLHWAILSLGPLLLGTGFAL, LLKVMPLLFSTAAFTLLYVAV, LFAAVLFEAAKGLFGLYVALF, and AFAAVPLFLLWMYLSWMIVLL.

It belongs to the UPF0761 family.

Its subcellular location is the cell inner membrane. This is UPF0761 membrane protein Avin_36810 from Azotobacter vinelandii (strain DJ / ATCC BAA-1303).